A 101-amino-acid polypeptide reads, in one-letter code: Small ribosomal subunit protein uS14 (101 aa).

Residues 1–25 form a disordered region; it reads MAKVSAIQKNKSRQKKSQRLHNKRS. The segment covering 10–25 has biased composition (basic residues); it reads NKSRQKKSQRLHNKRS.

The protein belongs to the universal ribosomal protein uS14 family. As to quaternary structure, part of the 30S ribosomal subunit. Contacts proteins S3 and S10.

Binds 16S rRNA, required for the assembly of 30S particles and may also be responsible for determining the conformation of the 16S rRNA at the A site. In Rickettsia typhi (strain ATCC VR-144 / Wilmington), this protein is Small ribosomal subunit protein uS14.